A 565-amino-acid polypeptide reads, in one-letter code: Maturase K (565 aa).

Belongs to the intron maturase 2 family. MatK subfamily.

Its subcellular location is the plastid. It is found in the chloroplast. Functionally, usually encoded in the trnK tRNA gene intron. Probably assists in splicing its own and other chloroplast group II introns. The chain is Maturase K from Staurastrum punctulatum (Green alga).